We begin with the raw amino-acid sequence, 794 residues long: Zinc finger protein 148 (794 aa).

Residue lysine 6 forms a Glycyl lysine isopeptide (Lys-Gly) (interchain with G-Cter in SUMO2) linkage. Position 51 is a phosphoserine (serine 51). Residues lysine 88, lysine 115, and lysine 132 each participate in a glycyl lysine isopeptide (Lys-Gly) (interchain with G-Cter in SUMO2) cross-link. The C2H2-type 1 zinc finger occupies 171 to 193 (HVCEHCNAAFRTNYHLQRHVFIH). A Phosphothreonine modification is found at threonine 194. C2H2-type zinc fingers lie at residues 199-221 (FQCSQCDMRFIQKYLLQRHEKIH) and 227-249 (FRCDECGMRFIQKYHMERHKRTH). Phosphoserine is present on serine 250. The segment at 255–278 (YQCEYCLQYFSRTDRVLKHKRMCH) adopts a C2H2-type 4 zinc-finger fold. Residue lysine 291 forms a Glycyl lysine isopeptide (Lys-Gly) (interchain with G-Cter in SUMO2) linkage. Residues 298-346 (EEDSGFSTSPKDNSLPKKKRQKPEKKSSGMDKESVLDKSDTKKDRNDYL) are disordered. Residues serine 301 and serine 306 each carry the phosphoserine modification. A Glycyl lysine isopeptide (Lys-Gly) (interchain with G-Cter in SUMO2) cross-link involves residue lysine 308. A compositionally biased stretch (basic and acidic residues) spans 321–344 (EKKSSGMDKESVLDKSDTKKDRND). A Glycyl lysine isopeptide (Lys-Gly) (interchain with G-Cter in SUMO1); alternate cross-link involves residue lysine 356. Residue lysine 356 forms a Glycyl lysine isopeptide (Lys-Gly) (interchain with G-Cter in SUMO2); alternate linkage. Lysine 402 is covalently cross-linked (Glycyl lysine isopeptide (Lys-Gly) (interchain with G-Cter in SUMO2)). At serine 412 the chain carries Phosphoserine. Glycyl lysine isopeptide (Lys-Gly) (interchain with G-Cter in SUMO2) cross-links involve residues lysine 421 and lysine 424. The span at 574-588 (NSSDVPEVTQSENVG) shows a compositional bias: polar residues. Residues 574–596 (NSSDVPEVTQSENVGSSSQASSS) are disordered. Lysine 607 bears the N6-acetyllysine mark. Phosphoserine occurs at positions 665 and 784.

The protein belongs to the krueppel C2H2-type zinc-finger protein family. Interacts with HNRNPDL. Interacts with the 5FMC complex; the interaction requires association with CHTOP. Interacts with CAVIN1. In terms of processing, sumoylated with SUMO2. Desumoylated by SENP3, resulting in the stimulation of transcription of its target genes. In terms of tissue distribution, expressed in heart, lung, kidney, skeletal muscle, liver, brain and spleen.

It localises to the nucleus. Involved in transcriptional regulation. Represses the transcription of a number of genes including gastrin, stromelysin and enolase. Binds to the G-rich box in the enhancer region of these genes. The sequence is that of Zinc finger protein 148 (Znf148) from Rattus norvegicus (Rat).